Here is a 148-residue protein sequence, read N- to C-terminus: UPF0178 protein EF_0842 (148 aa).

This sequence belongs to the UPF0178 family.

The chain is UPF0178 protein EF_0842 from Enterococcus faecalis (strain ATCC 700802 / V583).